Consider the following 377-residue polypeptide: Transcription factor Sox-17-alpha-B (377 aa).

2 disordered regions span residues 1-20 and 31-57; these read MSSP…KCSV and QWSE…AEGR. Positions 42 to 57 are enriched in basic and acidic residues; that stretch reads GKLKSDANSRSKAEGR. Positions 58-126 form a DNA-binding region, HMG box; the sequence is IRRPMNAFMV…QHMQDHPNYK (69 aa). Residues 262–376 enclose the Sox C-terminal domain; it reads GSPVEGMMAC…TAVYYCNYPS (115 aa). Residues 282–321 form a disordered region; that stretch reads MYLPGSTRHHQHPQAGQPSPPPEAQQLGRADQTQQADMMA. Positions 325-333 match the 9aaTAD motif; it reads TEFEQYLSY. The tract at residues 326–331 is required for transcriptional activity and interaction with ctnnb1; it reads EFEQYL.

In terms of assembly, interacts (via C-terminus) with ctnnb1/beta-catenin (via Armadillo repeats); this interaction is required for inhibition of wnt-signaling. As to expression, enriched in the embryonic endoderm. Expressed in the embryonic gut, with strong expression in the posterior gut during tailbud stages. Expressed at a low level in the adult kidney and spleen.

It localises to the nucleus. Functionally, transcription activator. Binds to the DNA sequence 5'-AACAAT-3'. All of the sox17 proteins are required for embryonic endoderm development and gastrulation movements, and show some redundancy in function. In addition, the sox17 proteins have distinct but overlapping roles in later gut development. Acts downstream of vegt-signaling in endoderm differentiation to induce a range of endodermal genes both directly (including endodermin and dhh/chh) and indirectly. Also represses wnt-responsive genes to inhibit wnt/beta-catenin signaling. The polypeptide is Transcription factor Sox-17-alpha-B (sox17a-b) (Xenopus laevis (African clawed frog)).